A 156-amino-acid polypeptide reads, in one-letter code: Small ribosomal subunit protein uS7 (156 aa).

It belongs to the universal ribosomal protein uS7 family. As to quaternary structure, part of the 30S ribosomal subunit. Contacts proteins S9 and S11.

In terms of biological role, one of the primary rRNA binding proteins, it binds directly to 16S rRNA where it nucleates assembly of the head domain of the 30S subunit. Is located at the subunit interface close to the decoding center, probably blocks exit of the E-site tRNA. This is Small ribosomal subunit protein uS7 from Rhodobacter capsulatus (Rhodopseudomonas capsulata).